The primary structure comprises 446 residues: Probable glycine dehydrogenase (decarboxylating) subunit 1 (446 aa).

Belongs to the GcvP family. N-terminal subunit subfamily. As to quaternary structure, the glycine cleavage system is composed of four proteins: P, T, L and H. In this organism, the P 'protein' is a heterodimer of two subunits.

It carries out the reaction N(6)-[(R)-lipoyl]-L-lysyl-[glycine-cleavage complex H protein] + glycine + H(+) = N(6)-[(R)-S(8)-aminomethyldihydrolipoyl]-L-lysyl-[glycine-cleavage complex H protein] + CO2. Functionally, the glycine cleavage system catalyzes the degradation of glycine. The P protein binds the alpha-amino group of glycine through its pyridoxal phosphate cofactor; CO(2) is released and the remaining methylamine moiety is then transferred to the lipoamide cofactor of the H protein. The sequence is that of Probable glycine dehydrogenase (decarboxylating) subunit 1 from Desulfitobacterium hafniense (strain DSM 10664 / DCB-2).